Reading from the N-terminus, the 251-residue chain is Phosphate import ATP-binding protein PstB (251 aa).

In terms of domain architecture, ABC transporter spans 5–246; the sequence is IKIRGVNFFY…PRDKRTEDYI (242 aa). 37–44 is a binding site for ATP; that stretch reads GPSGCGKS.

It belongs to the ABC transporter superfamily. Phosphate importer (TC 3.A.1.7) family. In terms of assembly, the complex is composed of two ATP-binding proteins (PstB), two transmembrane proteins (PstC and PstA) and a solute-binding protein (PstS).

It localises to the cell membrane. The catalysed reaction is phosphate(out) + ATP + H2O = ADP + 2 phosphate(in) + H(+). Functionally, part of the ABC transporter complex PstSACB involved in phosphate import. Responsible for energy coupling to the transport system. In Dehalococcoides mccartyi (strain CBDB1), this protein is Phosphate import ATP-binding protein PstB.